The chain runs to 237 residues: Neural retina-specific leucine zipper protein (237 aa).

Glycyl lysine isopeptide (Lys-Gly) (interchain with G-Cter in SUMO) cross-links involve residues K20 and K24. The segment at 23–57 (VKREPSEGRPGPPTASLGSTPYSSVPPSPTFSEPG) is disordered. A minimal transactivation domain (MTD) region spans residues 30–93 (GRPGPPTASL…AGEALGLSPE (64 aa)). Residues 159 to 185 (RLKQRRRTLKNRGYAQACRSKRLQQRR) are basic motif. The 64-residue stretch at 159–222 (RLKQRRRTLK…DLYKARCDRL (64 aa)) folds into the bZIP domain. The segment at 187 to 208 (LEAERARLAAQLDALRAEVARL) is leucine-zipper.

Belongs to the bZIP family. As to quaternary structure, interacts with FIZ1; this interaction represses transactivation. Interacts (via the leucine-zipper domain) with CRX. In terms of processing, phosphorylated. Disumoylated at Lys-20. Sumoylation modulates the transcriptional activity of NRL on RHO and NR2E3 promoters, and is required for normal rod differentiation. Expressed in the brain and the retina. Expressed strongly in rod and cone cells (at protein level).

The protein localises to the cytoplasm. The protein resides in the nucleus. Functionally, acts as a transcriptional activator which regulates the expression of several rod-specific genes, including RHO and PDE6B. Also functions as a transcriptional coactivator, stimulating transcription mediated by the transcription factor CRX and NR2E3. Binds to the rhodopsin promoter in a sequence-specific manner. This is Neural retina-specific leucine zipper protein (NRL) from Homo sapiens (Human).